The following is a 644-amino-acid chain: Kelch-like protein 34 (644 aa).

The BTB domain maps to Cys-29 to Met-96. The BACK domain occupies Cys-131–Ser-238. A disordered region spans residues Ala-304–Glu-329. The span at Glu-313–Glu-329 shows a compositional bias: acidic residues. Kelch repeat units lie at residues Glu-320–Asn-366, Phe-367–Glu-425, Arg-426–Arg-473, Val-475–Gly-526, Val-528–Glu-571, and Ala-573–Leu-623.

This chain is Kelch-like protein 34 (KLHL34), found in Homo sapiens (Human).